The chain runs to 246 residues: uncharacterized protein (246 aa).

3 disordered regions span residues 29-54 (SLET…ENGS), 93-114 (LRRT…EDKF), and 148-246 (PIPP…SVVI). Low complexity predominate over residues 35–49 (PTSSSPSLSSNSDVS). The span at 172 to 183 (RQQTNNIRTLHV) shows a compositional bias: polar residues. Low complexity-rich tracts occupy residues 190–203 (SSSS…PSSS) and 214–225 (SKTTKNRSSNSS). N-linked (GlcNAc...) asparagine glycosylation is present at N219. Over residues 235–246 (LTPSPTFESVVI) the composition is skewed to polar residues.

This is an uncharacterized protein from Caenorhabditis elegans.